A 397-amino-acid chain; its full sequence is Nickel-cobalt-cadmium resistance protein NccB (397 aa).

The helical transmembrane segment at 10–30 threads the bilayer; that stretch reads PSWPMIAGVAAAAALVGFGAA. A coiled-coil region spans residues 137-195; the sequence is EAAAMAAERKVAQARADLARKTYERESSLFQQGVTPRQEMESARIALDVAQAEVQRAAT.

This sequence belongs to the membrane fusion protein (MFP) (TC 8.A.1) family.

The protein resides in the cell inner membrane. Its function is as follows. Component of the NCC cation efflux system that confers resistance to nickel, cobalt and cadmium. This is Nickel-cobalt-cadmium resistance protein NccB (nccB) from Alcaligenes xylosoxydans xylosoxydans (Achromobacter xylosoxidans).